The following is a 51-amino-acid chain: Large ribosomal subunit protein eL39 (51 aa).

It belongs to the eukaryotic ribosomal protein eL39 family.

The protein is Large ribosomal subunit protein eL39 of Saccharolobus islandicus (strain L.S.2.15 / Lassen #1) (Sulfolobus islandicus).